The following is a 422-amino-acid chain: 2,3-bisphosphoglycerate-independent phosphoglycerate mutase (422 aa).

Positions 173-194 are disordered; sequence DADPKRVGKPVKDVKPTSDDPA. Positions 174–190 are enriched in basic and acidic residues; the sequence is ADPKRVGKPVKDVKPTS.

The protein belongs to the BPG-independent phosphoglycerate mutase family. A-PGAM subfamily.

It carries out the reaction (2R)-2-phosphoglycerate = (2R)-3-phosphoglycerate. It participates in carbohydrate degradation; glycolysis; pyruvate from D-glyceraldehyde 3-phosphate: step 3/5. In terms of biological role, catalyzes the interconversion of 2-phosphoglycerate and 3-phosphoglycerate. This Methanopyrus kandleri (strain AV19 / DSM 6324 / JCM 9639 / NBRC 100938) protein is 2,3-bisphosphoglycerate-independent phosphoglycerate mutase.